Consider the following 207-residue polypeptide: MGMLEARELLCERDERTLFSGLSFTLNAGEWVQITGSNGAGKTTLLRLLTGLSRPDAGEVLWQGQPLHQVRDSYHQNLLWIGHQPGIKTRLTALENLHFYHRDGDTAQCLEALAQAGLAGFDDIPVNQLSAGQQRRVALARLWLTRATLWILDEPFTAIDVNGVDRLTQRMAQHTEQGGIVILTTHQPLNVAESKIRRISLTQTRAA.

The ABC transporter domain occupies 4–207 (LEARELLCER…RISLTQTRAA (204 aa)). ATP is bound at residue 36 to 43 (GSNGAGKT).

This sequence belongs to the ABC transporter superfamily. CcmA exporter (TC 3.A.1.107) family. The complex is composed of two ATP-binding proteins (CcmA) and two transmembrane proteins (CcmB).

The protein resides in the cell inner membrane. The enzyme catalyses heme b(in) + ATP + H2O = heme b(out) + ADP + phosphate + H(+). Its function is as follows. Part of the ABC transporter complex CcmAB involved in the biogenesis of c-type cytochromes; once thought to export heme, this seems not to be the case, but its exact role is uncertain. Responsible for energy coupling to the transport system. This chain is Cytochrome c biogenesis ATP-binding export protein CcmA, found in Shigella sonnei (strain Ss046).